We begin with the raw amino-acid sequence, 172 residues long: uncharacterized protein (172 aa).

Over residues 1–17 (MISLDKDENEIEHHNEE) the composition is skewed to basic and acidic residues. Residues 1–27 (MISLDKDENEIEHHNEENSLVEQETAP) are disordered. A helical transmembrane segment spans residues 129-151 (IVTVLIGIIVAIFVLVVIGIAAF).

It localises to the membrane. This is an uncharacterized protein from Bacillus subtilis (strain 168).